Consider the following 186-residue polypeptide: Ribosome-recycling factor (186 aa).

This sequence belongs to the RRF family.

Its subcellular location is the cytoplasm. Responsible for the release of ribosomes from messenger RNA at the termination of protein biosynthesis. May increase the efficiency of translation by recycling ribosomes from one round of translation to another. In Janthinobacterium sp. (strain Marseille) (Minibacterium massiliensis), this protein is Ribosome-recycling factor.